The sequence spans 93 residues: Small ribosomal subunit protein uS19 (93 aa).

This sequence belongs to the universal ribosomal protein uS19 family.

Functionally, protein S19 forms a complex with S13 that binds strongly to the 16S ribosomal RNA. In Nocardia farcinica (strain IFM 10152), this protein is Small ribosomal subunit protein uS19.